Reading from the N-terminus, the 300-residue chain is uncharacterized protein (300 aa).

It belongs to the histone deacetylase family.

Putative deacetylase. This is an uncharacterized protein from Picosynechococcus sp. (strain ATCC 27264 / PCC 7002 / PR-6) (Agmenellum quadruplicatum).